The chain runs to 541 residues: Chaperonin GroEL (541 aa).

Residues 29 to 32 (TLGP), 86 to 90 (DGTTT), glycine 413, 480 to 482 (NAA), and aspartate 496 contribute to the ATP site.

The protein belongs to the chaperonin (HSP60) family. Forms a cylinder of 14 subunits composed of two heptameric rings stacked back-to-back. Interacts with the co-chaperonin GroES.

It localises to the cytoplasm. It catalyses the reaction ATP + H2O + a folded polypeptide = ADP + phosphate + an unfolded polypeptide.. Together with its co-chaperonin GroES, plays an essential role in assisting protein folding. The GroEL-GroES system forms a nano-cage that allows encapsulation of the non-native substrate proteins and provides a physical environment optimized to promote and accelerate protein folding. The polypeptide is Chaperonin GroEL (Gardnerella vaginalis).